Reading from the N-terminus, the 285-residue chain is Acetyl-coenzyme A carboxylase carboxyl transferase subunit beta (285 aa).

Positions 22-285 (LWTKCEACGA…HPGVAYAPGV (264 aa)) constitute a CoA carboxyltransferase N-terminal domain. Zn(2+) contacts are provided by cysteine 26, cysteine 29, cysteine 45, and cysteine 48. A C4-type zinc finger spans residues 26–48 (CEACGAQIYKKEFQENLHVCPKC).

The protein belongs to the AccD/PCCB family. Acetyl-CoA carboxylase is a heterohexamer composed of biotin carboxyl carrier protein (AccB), biotin carboxylase (AccC) and two subunits each of ACCase subunit alpha (AccA) and ACCase subunit beta (AccD). The cofactor is Zn(2+).

Its subcellular location is the cytoplasm. The catalysed reaction is N(6)-carboxybiotinyl-L-lysyl-[protein] + acetyl-CoA = N(6)-biotinyl-L-lysyl-[protein] + malonyl-CoA. It functions in the pathway lipid metabolism; malonyl-CoA biosynthesis; malonyl-CoA from acetyl-CoA: step 1/1. Component of the acetyl coenzyme A carboxylase (ACC) complex. Biotin carboxylase (BC) catalyzes the carboxylation of biotin on its carrier protein (BCCP) and then the CO(2) group is transferred by the transcarboxylase to acetyl-CoA to form malonyl-CoA. The polypeptide is Acetyl-coenzyme A carboxylase carboxyl transferase subunit beta (Thermus thermophilus (strain ATCC 27634 / DSM 579 / HB8)).